The sequence spans 196 residues: uncharacterized protein (196 aa).

Residues 26–46 (ITFFFILLICFICILLLLAIF) form a helical membrane-spanning segment.

Its subcellular location is the membrane. This is an uncharacterized protein from Mus musculus (Mouse).